We begin with the raw amino-acid sequence, 102 residues long: Putative pterin-4-alpha-carbinolamine dehydratase (102 aa).

It belongs to the pterin-4-alpha-carbinolamine dehydratase family.

The enzyme catalyses (4aS,6R)-4a-hydroxy-L-erythro-5,6,7,8-tetrahydrobiopterin = (6R)-L-erythro-6,7-dihydrobiopterin + H2O. The polypeptide is Putative pterin-4-alpha-carbinolamine dehydratase (Burkholderia cenocepacia (strain HI2424)).